A 335-amino-acid chain; its full sequence is Vitamin B12 import system permease protein BtuC (335 aa).

9 consecutive transmembrane segments (helical) span residues Leu-25–Trp-45, Leu-67–Phe-87, Gly-95–Gly-114, Leu-118–Gly-140, Leu-153–Phe-173, Leu-200–Phe-220, Val-243–Ile-263, Cys-286–Phe-306, and Ala-308–Leu-328.

Belongs to the binding-protein-dependent transport system permease family. FecCD subfamily. The complex is composed of two ATP-binding proteins (BtuD), two transmembrane proteins (BtuC) and a solute-binding protein (BtuF).

Its subcellular location is the cell inner membrane. Part of the ABC transporter complex BtuCDF involved in vitamin B12 import. Involved in the translocation of the substrate across the membrane. The chain is Vitamin B12 import system permease protein BtuC from Yersinia enterocolitica serotype O:8 / biotype 1B (strain NCTC 13174 / 8081).